The primary structure comprises 86 residues: Antitoxin VapB33 (86 aa).

Antitoxin component of a type II toxin-antitoxin (TA) system. Upon expression in M.smegmatis neutralizes the effect of cognate toxin VapC33. The sequence is that of Antitoxin VapB33 (vapB33) from Mycobacterium tuberculosis (strain ATCC 25618 / H37Rv).